The primary structure comprises 93 residues: Large ribosomal subunit protein bL27 (93 aa).

Positions 1 to 9 are excised as a propeptide; that stretch reads MLRLDLQFF.

The protein belongs to the bacterial ribosomal protein bL27 family. In terms of processing, the N-terminus is cleaved by ribosomal processing cysteine protease Prp.

This chain is Large ribosomal subunit protein bL27, found in Bacillus licheniformis (strain ATCC 14580 / DSM 13 / JCM 2505 / CCUG 7422 / NBRC 12200 / NCIMB 9375 / NCTC 10341 / NRRL NRS-1264 / Gibson 46).